A 59-amino-acid chain; its full sequence is Large ribosomal subunit protein uL30 (59 aa).

It belongs to the universal ribosomal protein uL30 family. Part of the 50S ribosomal subunit.

This is Large ribosomal subunit protein uL30 from Stutzerimonas stutzeri (strain A1501) (Pseudomonas stutzeri).